An 893-amino-acid polypeptide reads, in one-letter code: UPF0182 protein CLK_3152 (893 aa).

The next 7 helical transmembrane spans lie at 9-29, 49-69, 94-114, 154-174, 202-222, 246-266, and 273-293; these read IPLF…NFII, AIII…WMYY, LFFI…SSSY, VIIS…FILE, LAIV…IKIW, FYKI…LSIV, and VSIC…ASFL.

Belongs to the UPF0182 family.

The protein resides in the cell membrane. In Clostridium botulinum (strain Loch Maree / Type A3), this protein is UPF0182 protein CLK_3152.